The following is a 376-amino-acid chain: UDP-N-acetylglucosamine--N-acetylmuramyl-(pentapeptide) pyrophosphoryl-undecaprenol N-acetylglucosamine transferase (376 aa).

UDP-N-acetyl-alpha-D-glucosamine contacts are provided by residues 11–13 (TGG), N117, R160, S208, and Q310.

The protein belongs to the glycosyltransferase 28 family. MurG subfamily.

The protein resides in the cell inner membrane. The catalysed reaction is di-trans,octa-cis-undecaprenyl diphospho-N-acetyl-alpha-D-muramoyl-L-alanyl-D-glutamyl-meso-2,6-diaminopimeloyl-D-alanyl-D-alanine + UDP-N-acetyl-alpha-D-glucosamine = di-trans,octa-cis-undecaprenyl diphospho-[N-acetyl-alpha-D-glucosaminyl-(1-&gt;4)]-N-acetyl-alpha-D-muramoyl-L-alanyl-D-glutamyl-meso-2,6-diaminopimeloyl-D-alanyl-D-alanine + UDP + H(+). It participates in cell wall biogenesis; peptidoglycan biosynthesis. Its function is as follows. Cell wall formation. Catalyzes the transfer of a GlcNAc subunit on undecaprenyl-pyrophosphoryl-MurNAc-pentapeptide (lipid intermediate I) to form undecaprenyl-pyrophosphoryl-MurNAc-(pentapeptide)GlcNAc (lipid intermediate II). The protein is UDP-N-acetylglucosamine--N-acetylmuramyl-(pentapeptide) pyrophosphoryl-undecaprenol N-acetylglucosamine transferase of Rickettsia conorii (strain ATCC VR-613 / Malish 7).